A 507-amino-acid polypeptide reads, in one-letter code: MNKDINIAAIIKNEIENFEGKIQNHDIGKVIIVGDGVALVSGIEKVKFGELVEFENNVLGIALNLEQDLIGVVIMASENSVFQGSIVRRTKSVISITVGDQLLGRVVNALGIPIDGKAELDNSLKSAIFTNAPSIMDRKSVDRGLKTGILAIDSLVPIGKGQRELIIGDRQTGKTTIAIDAILNQKGKDVYCVYVAIGQKNSSVAQIVSLLEKKGALEYTTVILAGASELSPLQYLAPYSGAAIAEYWMNKKKDVLIIYDDLSKHAIAYRTLSLLLRRPPGREAFPGDIFYQHSYLLERSAQLSNDKGGGSITALPIIETQAGDISAYIPTNVISITDGQIFLRDSLFNSGQKPAIDIGLSVSRVGSAAQTNLMKWASSSLKLNLAQYNELKAFAQFGSDLGPSSQLILDRGNKIYEILKQENQYPLTERQQIMLLILIRENLIDSLEQKSIPLFKSAFLKYCDSEPKFRDKIEKMDYNRVLEPNNLAGILKDITDFIEKFNLGNVF.

ATP is bound at residue 168-175; the sequence is GDRQTGKT.

It belongs to the ATPase alpha/beta chains family. In terms of assembly, F-type ATPases have 2 components, CF(1) - the catalytic core - and CF(0) - the membrane proton channel. CF(1) has five subunits: alpha(3), beta(3), gamma(1), delta(1), epsilon(1). CF(0) has three main subunits: a(1), b(2) and c(9-12). The alpha and beta chains form an alternating ring which encloses part of the gamma chain. CF(1) is attached to CF(0) by a central stalk formed by the gamma and epsilon chains, while a peripheral stalk is formed by the delta and b chains.

The protein localises to the cell membrane. It carries out the reaction ATP + H2O + 4 H(+)(in) = ADP + phosphate + 5 H(+)(out). Functionally, produces ATP from ADP in the presence of a proton gradient across the membrane. The alpha chain is a regulatory subunit. In Mesomycoplasma hyopneumoniae (strain J / ATCC 25934 / NCTC 10110) (Mycoplasma hyopneumoniae), this protein is ATP synthase subunit alpha.